The following is a 510-amino-acid chain: D-alanine--D-alanyl carrier protein ligase (510 aa).

157 to 158 contacts ATP; it reads TS. D202 serves as a coordination point for D-alanine. 297 to 302 provides a ligand contact to ATP; sequence NTYGPT. A D-alanine-binding site is contributed by V306. D389 and K498 together coordinate ATP. K498 lines the D-alanine pocket.

This sequence belongs to the ATP-dependent AMP-binding enzyme family. DltA subfamily.

The protein localises to the cytoplasm. It carries out the reaction holo-[D-alanyl-carrier protein] + D-alanine + ATP = D-alanyl-[D-alanyl-carrier protein] + AMP + diphosphate. Its pathway is cell wall biogenesis; lipoteichoic acid biosynthesis. Its function is as follows. Catalyzes the first step in the D-alanylation of lipoteichoic acid (LTA), the activation of D-alanine and its transfer onto the D-alanyl carrier protein (Dcp) DltC. In an ATP-dependent two-step reaction, forms a high energy D-alanyl-AMP intermediate, followed by transfer of the D-alanyl residue as a thiol ester to the phosphopantheinyl prosthetic group of the Dcp. D-alanylation of LTA plays an important role in modulating the properties of the cell wall in Gram-positive bacteria, influencing the net charge of the cell wall. The chain is D-alanine--D-alanyl carrier protein ligase from Listeria innocua serovar 6a (strain ATCC BAA-680 / CLIP 11262).